The chain runs to 502 residues: Glycerol kinase (502 aa).

An ADP-binding site is contributed by T14. T14, T15, and S16 together coordinate ATP. T14 contributes to the sn-glycerol 3-phosphate binding site. ADP is bound at residue R18. 4 residues coordinate sn-glycerol 3-phosphate: R84, E85, Y136, and D246. Glycerol contacts are provided by R84, E85, Y136, D246, and Q247. Positions 268 and 311 each coordinate ADP. ATP is bound by residues T268, G311, Q315, and G412. Residues G412 and N416 each coordinate ADP.

Belongs to the FGGY kinase family. In terms of assembly, homotetramer and homodimer (in equilibrium). Heterodimer with EIIA-Glc. Binds 1 zinc ion per glycerol kinase EIIA-Glc dimer. The zinc ion is important for dimerization.

The catalysed reaction is glycerol + ATP = sn-glycerol 3-phosphate + ADP + H(+). The protein operates within polyol metabolism; glycerol degradation via glycerol kinase pathway; sn-glycerol 3-phosphate from glycerol: step 1/1. Activity of this regulatory enzyme is affected by several metabolites. Allosterically and non-competitively inhibited by fructose 1,6-bisphosphate (FBP) and unphosphorylated phosphocarrier protein EIIA-Glc (III-Glc), an integral component of the bacterial phosphotransferase (PTS) system. In terms of biological role, key enzyme in the regulation of glycerol uptake and metabolism. Catalyzes the phosphorylation of glycerol to yield sn-glycerol 3-phosphate. This is Glycerol kinase from Escherichia fergusonii (strain ATCC 35469 / DSM 13698 / CCUG 18766 / IAM 14443 / JCM 21226 / LMG 7866 / NBRC 102419 / NCTC 12128 / CDC 0568-73).